The sequence spans 745 residues: Kinesin-like protein KIN-14M (745 aa).

The segment at 1-31 (MVGEMTNNGRIRPSFPVKDLTSNEGSEYGGP) is disordered. A globular region spans residues 1–35 (MVGEMTNNGRIRPSFPVKDLTSNEGSEYGGPVEFT). Microtubule-binding regions lie at residues 65 to 77 (YVKR…RWFQ) and 198 to 745 (SLQL…LSLG). 2 coiled-coil regions span residues 76 to 223 (FQEL…GEKE) and 259 to 389 (KDEL…GNIR). Residues 387-724 (NIRVFCRVRP…LRFAARVNAC (338 aa)) enclose the Kinesin motor domain. 472 to 479 (GQTGSGKT) lines the ATP pocket.

This sequence belongs to the TRAFAC class myosin-kinesin ATPase superfamily. Kinesin family. KIN-14 subfamily. Bind to microtubules in an ATP-insensitive manner (in vitro). Homodimer and heterodimer with KIN14N/KATC (in vitro).

Its subcellular location is the cytoplasm. It is found in the cytoskeleton. In Arabidopsis thaliana (Mouse-ear cress), this protein is Kinesin-like protein KIN-14M.